The sequence spans 333 residues: Cysteine protease (333 aa).

Residues 1–18 (MKFLLVAALCALVAIGSC) form the signal peptide. The propeptide at 19 to 108 (KPTREEIKTF…MEAAKEPLIN (90 aa)) is activation peptide. N-linked (GlcNAc...) asparagine glycosylation occurs at asparagine 93. Disulfide bonds link cysteine 134–cysteine 182 and cysteine 168–cysteine 214. Residue cysteine 137 is part of the active site. Residues histidine 281 and asparagine 301 contribute to the active site.

Belongs to the peptidase C1 family. Homodimer.

Functionally, cysteine protease. The polypeptide is Cysteine protease (Blomia tropicalis (Mite)).